Here is a 206-residue protein sequence, read N- to C-terminus: Guanylate kinase (206 aa).

The Guanylate kinase-like domain maps to 5-183 (FNLLILSGPS…SKEIILSIAK (179 aa)). Residue 12–19 (GPSGAGKS) coordinates ATP.

The protein belongs to the guanylate kinase family.

The protein resides in the cytoplasm. The enzyme catalyses GMP + ATP = GDP + ADP. In terms of biological role, essential for recycling GMP and indirectly, cGMP. The sequence is that of Guanylate kinase (gmk) from Helicobacter pylori (strain J99 / ATCC 700824) (Campylobacter pylori J99).